A 144-amino-acid polypeptide reads, in one-letter code: 3-hydroxyacyl-[acyl-carrier-protein] dehydratase FabZ (144 aa).

Histidine 51 is a catalytic residue.

This sequence belongs to the thioester dehydratase family. FabZ subfamily.

Its subcellular location is the cytoplasm. The enzyme catalyses a (3R)-hydroxyacyl-[ACP] = a (2E)-enoyl-[ACP] + H2O. Functionally, involved in unsaturated fatty acids biosynthesis. Catalyzes the dehydration of short chain beta-hydroxyacyl-ACPs and long chain saturated and unsaturated beta-hydroxyacyl-ACPs. The sequence is that of 3-hydroxyacyl-[acyl-carrier-protein] dehydratase FabZ from Lactococcus lactis subsp. cremoris (strain MG1363).